The following is a 287-amino-acid chain: Elongation factor Ts (287 aa).

Positions 77–80 are involved in Mg(2+) ion dislocation from EF-Tu; sequence TDFV.

This sequence belongs to the EF-Ts family.

The protein resides in the cytoplasm. Functionally, associates with the EF-Tu.GDP complex and induces the exchange of GDP to GTP. It remains bound to the aminoacyl-tRNA.EF-Tu.GTP complex up to the GTP hydrolysis stage on the ribosome. This Wolbachia sp. subsp. Brugia malayi (strain TRS) protein is Elongation factor Ts.